The following is a 306-amino-acid chain: UDP-3-O-acyl-N-acetylglucosamine deacetylase (306 aa).

Zn(2+) is bound by residues histidine 78, histidine 237, and aspartate 241. Residue histidine 264 is the Proton donor of the active site.

This sequence belongs to the LpxC family. Zn(2+) serves as cofactor.

It carries out the reaction a UDP-3-O-[(3R)-3-hydroxyacyl]-N-acetyl-alpha-D-glucosamine + H2O = a UDP-3-O-[(3R)-3-hydroxyacyl]-alpha-D-glucosamine + acetate. It participates in glycolipid biosynthesis; lipid IV(A) biosynthesis; lipid IV(A) from (3R)-3-hydroxytetradecanoyl-[acyl-carrier-protein] and UDP-N-acetyl-alpha-D-glucosamine: step 2/6. In terms of biological role, catalyzes the hydrolysis of UDP-3-O-myristoyl-N-acetylglucosamine to form UDP-3-O-myristoylglucosamine and acetate, the committed step in lipid A biosynthesis. In Aromatoleum aromaticum (strain DSM 19018 / LMG 30748 / EbN1) (Azoarcus sp. (strain EbN1)), this protein is UDP-3-O-acyl-N-acetylglucosamine deacetylase.